The following is a 424-amino-acid chain: UDP-N-acetylglucosamine 1-carboxyvinyltransferase (424 aa).

A phosphoenolpyruvate-binding site is contributed by 22–23 (KN). R98 lines the UDP-N-acetyl-alpha-D-glucosamine pocket. C122 (proton donor) is an active-site residue. C122 is modified (2-(S-cysteinyl)pyruvic acid O-phosphothioketal). UDP-N-acetyl-alpha-D-glucosamine-binding positions include 127-131 (RPVDQ), D312, and I334.

The protein belongs to the EPSP synthase family. MurA subfamily.

It is found in the cytoplasm. It catalyses the reaction phosphoenolpyruvate + UDP-N-acetyl-alpha-D-glucosamine = UDP-N-acetyl-3-O-(1-carboxyvinyl)-alpha-D-glucosamine + phosphate. It participates in cell wall biogenesis; peptidoglycan biosynthesis. Cell wall formation. Adds enolpyruvyl to UDP-N-acetylglucosamine. The sequence is that of UDP-N-acetylglucosamine 1-carboxyvinyltransferase from Xanthomonas axonopodis pv. citri (strain 306).